A 111-amino-acid polypeptide reads, in one-letter code: Disintegrin lebein-1-alpha (111 aa).

Positions 1–20 are cleaved as a signal peptide; sequence MIQVLLVTICLAVFPYQGSS. A propeptide spanning residues 21–47 is cleaved from the precursor; it reads IILESGNVNDYEIVYPKKVTVLPTGAM. Residues 47–111 enclose the Disintegrin domain; that stretch reads MNSGNPCCDP…SDCPRNPYKD (65 aa). 4 disulfides stabilise this stretch: cysteine 53-cysteine 76, cysteine 67-cysteine 73, cysteine 72-cysteine 97, and cysteine 85-cysteine 104. Positions 89–91 match the Cell attachment site motif; sequence RGD.

The protein belongs to the disintegrin family. Dimeric disintegrin subfamily. Heterodimer with subunit beta; disulfide-linked. Expressed by the venom gland.

The protein resides in the secreted. Functionally, strongly inhibits ADP-induced platelet aggregation on human platelet-rich plasma. Also avidly binds to the laminin-binding beta-1 integrins (alpha-3/beta-1, alpha-6/beta-1, and alpha-7/beta-1) in an RGD-independent manner. This is Disintegrin lebein-1-alpha from Macrovipera lebetinus (Levantine viper).